The primary structure comprises 113 residues: Large ribosomal subunit protein P2 (113 aa).

The disordered stretch occupies residues 62 to 113 (LASVPSGGAGGAAASGGAAAAGGSAQAEAAPEAAKEEEKEESDEDMGFGLFD). The span at 76 to 93 (SGGAAAAGGSAQAEAAPE) shows a compositional bias: low complexity. A Phosphoserine modification is found at Ser-103.

It belongs to the eukaryotic ribosomal protein P1/P2 family. P1 and P2 exist as dimers at the large ribosomal subunit.

In terms of biological role, plays an important role in the elongation step of protein synthesis. The protein is Large ribosomal subunit protein P2 (ALTA5) of Alternaria alternata (Alternaria rot fungus).